A 725-amino-acid polypeptide reads, in one-letter code: Protein ECM27 (725 aa).

12 consecutive transmembrane segments (helical) span residues 21-41, 119-139, 157-177, 178-198, 397-417, 439-459, 470-490, 526-546, 559-579, 621-641, 668-688, and 704-724; these read VTFI…LGIC, VLGA…IIMS, LLFS…NQVT, VLNC…KLTF, ISDA…KLSC, LPII…CSIL, LVYL…TAFI, IQII…SLLA, ILGL…NSVG, LNSM…IGAF, FIVS…FFGG, and GISM…LELF.

It belongs to the Ca(2+):cation antiporter (CaCA) (TC 2.A.19) family.

The protein localises to the membrane. This is Protein ECM27 (ECM27) from Saccharomyces cerevisiae (strain ATCC 204508 / S288c) (Baker's yeast).